We begin with the raw amino-acid sequence, 312 residues long: uncharacterized protein (312 aa).

2 stretches are compositionally biased toward basic and acidic residues: residues 1 to 17 (MAKY…EQLE) and 28 to 39 (PDRDGPRHSAKL). The disordered stretch occupies residues 1–39 (MAKYDHLELVRLPEQLERRKHGGGSPPPDRDGPRHSAKL).

This is an uncharacterized protein from Sinorhizobium fredii (strain NBRC 101917 / NGR234).